Consider the following 115-residue polypeptide: Sericin-1 (115 aa).

Residues 1-115 (GSSGSSGSSG…GGSSSTSSSN (115 aa)) form a disordered region.

In terms of tissue distribution, produced exclusively in the middle (MSG) section of silk glands.

Its subcellular location is the secreted. In terms of biological role, provides the silk fibroin thread with a sticky coating. Acts as a cement by sticking silk threads together. This is Sericin-1 (SER1) from Galleria mellonella (Greater wax moth).